Reading from the N-terminus, the 528-residue chain is Oxamate amidohydrolase proenzyme (528 aa).

Thr-342 (nucleophile) is an active-site residue. Residue 424–425 (GG) participates in substrate binding.

It belongs to the gamma-glutamyltransferase family. In terms of assembly, heterodimer that consists of a 35.5 kDa large (alpha) subunit and a 20 kDa small (beta) subunit, which are synthesized from a single polypeptide. In terms of processing, cleaved by autocatalysis into a large (alpha) and a small (beta) subunit.

The enzyme catalyses oxamate + H2O = oxalate + NH4(+). In terms of biological role, involved in the uric acid degradation pathway. Catalyzes the conversion of oxamate to oxalate. In Klebsiella pneumoniae subsp. pneumoniae (strain ATCC 700721 / MGH 78578), this protein is Oxamate amidohydrolase proenzyme.